Here is a 440-residue protein sequence, read N- to C-terminus: Alpha-methylserine aldolase (440 aa).

N6-(pyridoxal phosphate)lysine is present on lysine 255.

This sequence belongs to the SHMT family. Alpha-methylserine aldolase subfamily. In terms of assembly, homodimer. Pyridoxal 5'-phosphate is required as a cofactor.

It carries out the reaction 2-methyl-L-serine = formaldehyde + L-alanine. The catalysed reaction is 2-ethyl-L-serine = (2S)-2-aminobutanoate + formaldehyde. With respect to regulation, in the alpha-methyl-L-serine synthesis reaction, activity is inhibited by an excess amount of formaldehyde (at a concentration greater than 4 mM). Formaldehyde release activity is reduced by the sulfhydryl reagent N-ethylmaleimide, iodoacetate amide and iodoacetic acid, but not by dithiothreitol and 2-mercaptoethanol. Activity is enhanced by 1 mM of manganese chloride. In terms of biological role, catalyzes the reversible interconversion of alpha-methyl-L-serine to L-alanine and formaldehyde. Can also catalyze the synthesis of alpha-ethyl-L-serine from L-2-aminobutyric acid and formaldehyde. Also shows low alanine racemase activity. Cannot use alpha-methyl-D-serine, L-serine, D-serine, (S)-2-amino-1-propanol, (R)-2-amino-1-propanol, (S)-alpha-hydroxymethyltyrosine, (R)-alpha-hydroxymethyltyrosine, alpha-iso-butyl-DL-serine, alpha-iso-propyl-DL-serine or alpha-benzyl-DL-serine. Cannot use D-alanine instead of L-alanine as the substrate for alpha-methyl-L-serine synthesis. Does not require tetrahydrofolate (THF) for activity. The chain is Alpha-methylserine aldolase from Variovorax paradoxus.